A 186-amino-acid chain; its full sequence is RNA-free ribonuclease P (186 aa).

It belongs to the HARP family.

It catalyses the reaction Endonucleolytic cleavage of RNA, removing 5'-extranucleotides from tRNA precursor.. RNA-free RNase P that catalyzes the removal of the 5'-leader sequence from pre-tRNA to produce the mature 5'-terminus. This chain is RNA-free ribonuclease P, found in Hydrogenobaculum sp. (strain Y04AAS1).